A 125-amino-acid polypeptide reads, in one-letter code: MPTINQLVRKPRVSEKLKSKSPALENCPQRRGVCTRVYTTTPKKPNSALRKVAKVRLTNGFEVISYIGGEGHNLQEHSVVLIRGGRVKDLPGVRYHIVRGSLDLQGVKDRKQARSKYGAKRPKAA.

3-methylthioaspartic acid is present on D89.

This sequence belongs to the universal ribosomal protein uS12 family. In terms of assembly, part of the 30S ribosomal subunit. Contacts proteins S8 and S17. May interact with IF1 in the 30S initiation complex.

Its function is as follows. With S4 and S5 plays an important role in translational accuracy. Functionally, interacts with and stabilizes bases of the 16S rRNA that are involved in tRNA selection in the A site and with the mRNA backbone. Located at the interface of the 30S and 50S subunits, it traverses the body of the 30S subunit contacting proteins on the other side and probably holding the rRNA structure together. The combined cluster of proteins S8, S12 and S17 appears to hold together the shoulder and platform of the 30S subunit. This Ralstonia nicotianae (strain ATCC BAA-1114 / GMI1000) (Ralstonia solanacearum) protein is Small ribosomal subunit protein uS12.